The chain runs to 549 residues: Leucine-rich repeat, immunoglobulin-like domain and transmembrane domain-containing protein 2 (549 aa).

An N-terminal signal peptide occupies residues 1-22 (MAFVFYCFLQVLVSWVIHAVQP). Residues 23-54 (FCLPECTCSEESFGRSLQCMSMSLGKIPDNFP) enclose the LRRNT domain. 4 LRR repeats span residues 80 to 103 (SLEYLWLNFNNVTVIHLGALEDLP), 104 to 125 (ELRELRLEGNKLRSVPWTAFRA), 128 to 149 (LLRVLDLKHNRIDSVPELALQF), and 152 to 173 (NLIYLDISSNRLTVVSKGVFLN). Residue N90 is glycosylated (N-linked (GlcNAc...) asparagine). An LRRCT domain is found at 200–252 (NPWLCDCRLRGLAQFVKSVGPPFILVNSYLVCQGPVSKAGQLLHETELGVCMK). In terms of domain architecture, Ig-like spans 253–339 (PTISTPSVNV…FNSIGRSSLV (87 aa)). N261 carries N-linked (GlcNAc...) asparagine glycosylation. An intrachain disulfide couples C274 to C327. The Fibronectin type-III domain occupies 361–447 (EVSAYVDLRV…QPPSQGQCVV (87 aa)). Residues 463-483 (LLHVTVVLCAVLLALPVGAYV) traverse the membrane as a helical segment. Residue N491 is glycosylated (N-linked (GlcNAc...) asparagine). The interval 521–549 (FKDPSGVYEDGESHRVMEEDEEVEKEGIS) is disordered. Acidic residues predominate over residues 538–549 (EEDEEVEKEGIS).

As to quaternary structure, interacts with LRIT1; may form a heterodimer with LRIT1.

Its subcellular location is the membrane. This chain is Leucine-rich repeat, immunoglobulin-like domain and transmembrane domain-containing protein 2 (Lrit2), found in Mus musculus (Mouse).